The following is a 539-amino-acid chain: Phosphoenolpyruvate carboxykinase (ATP) (539 aa).

Substrate-binding residues include Arg64, Tyr206, and Lys212. ATP-binding positions include Lys212, His231, and 247–255 (GLSGTGKTT). Residues Lys212 and His231 each contribute to the Mn(2+) site. Asp268 contacts Mn(2+). ATP contacts are provided by residues Glu296, Arg332, 448–449 (RI), and Thr454. Arg332 serves as a coordination point for substrate.

The protein belongs to the phosphoenolpyruvate carboxykinase (ATP) family. In terms of assembly, monomer. Requires Mn(2+) as cofactor.

It localises to the cytoplasm. The enzyme catalyses oxaloacetate + ATP = phosphoenolpyruvate + ADP + CO2. It participates in carbohydrate biosynthesis; gluconeogenesis. Functionally, involved in the gluconeogenesis. Catalyzes the conversion of oxaloacetate (OAA) to phosphoenolpyruvate (PEP) through direct phosphoryl transfer between the nucleoside triphosphate and OAA. In Sodalis glossinidius (strain morsitans), this protein is Phosphoenolpyruvate carboxykinase (ATP).